The sequence spans 348 residues: Phage-like element PBSX protein XkdT (348 aa).

It belongs to the Mu gp47/PBSX XkdT family.

The polypeptide is Phage-like element PBSX protein XkdT (xkdT) (Bacillus subtilis (strain 168)).